A 481-amino-acid polypeptide reads, in one-letter code: UDP-glycosyltransferase 88F3 (481 aa).

UDP-alpha-D-glucose contacts are provided by residues S288, 357–358 (WA), 375–383 (HCGWNSVLE), and 397–400 (YAEQ).

It belongs to the UDP-glycosyltransferase family.

Its function is as follows. Glycosyltransferase that may possess chalcone and dihydrochalcone 2'-O-glucosyltransferase activity. The sequence is that of UDP-glycosyltransferase 88F3 from Pyrus communis (Pear).